Here is a 292-residue protein sequence, read N- to C-terminus: Ribosomal protein L11 methyltransferase (292 aa).

Residues Thr144, Gly165, Asp187, and Asn229 each contribute to the S-adenosyl-L-methionine site.

This sequence belongs to the methyltransferase superfamily. PrmA family.

The protein localises to the cytoplasm. It carries out the reaction L-lysyl-[protein] + 3 S-adenosyl-L-methionine = N(6),N(6),N(6)-trimethyl-L-lysyl-[protein] + 3 S-adenosyl-L-homocysteine + 3 H(+). In terms of biological role, methylates ribosomal protein L11. In Pseudomonas syringae pv. tomato (strain ATCC BAA-871 / DC3000), this protein is Ribosomal protein L11 methyltransferase.